Here is a 202-residue protein sequence, read N- to C-terminus: Small ribosomal subunit protein uS4c (202 aa).

In terms of domain architecture, S4 RNA-binding spans 90-158; it reads MRLDNIIFRL…ITKNIELSQK (69 aa).

Belongs to the universal ribosomal protein uS4 family. As to quaternary structure, part of the 30S ribosomal subunit. Contacts protein S5. The interaction surface between S4 and S5 is involved in control of translational fidelity.

It localises to the plastid. The protein localises to the chloroplast. One of the primary rRNA binding proteins, it binds directly to 16S rRNA where it nucleates assembly of the body of the 30S subunit. Its function is as follows. With S5 and S12 plays an important role in translational accuracy. The polypeptide is Small ribosomal subunit protein uS4c (rps4) (Marchantia romanica (Liverwort)).